The primary structure comprises 576 residues: Proline--tRNA ligase (576 aa).

It belongs to the class-II aminoacyl-tRNA synthetase family. ProS type 1 subfamily. Homodimer.

The protein resides in the cytoplasm. The enzyme catalyses tRNA(Pro) + L-proline + ATP = L-prolyl-tRNA(Pro) + AMP + diphosphate. Functionally, catalyzes the attachment of proline to tRNA(Pro) in a two-step reaction: proline is first activated by ATP to form Pro-AMP and then transferred to the acceptor end of tRNA(Pro). As ProRS can inadvertently accommodate and process non-cognate amino acids such as alanine and cysteine, to avoid such errors it has two additional distinct editing activities against alanine. One activity is designated as 'pretransfer' editing and involves the tRNA(Pro)-independent hydrolysis of activated Ala-AMP. The other activity is designated 'posttransfer' editing and involves deacylation of mischarged Ala-tRNA(Pro). The misacylated Cys-tRNA(Pro) is not edited by ProRS. The polypeptide is Proline--tRNA ligase (Leptospira interrogans serogroup Icterohaemorrhagiae serovar copenhageni (strain Fiocruz L1-130)).